The following is a 415-amino-acid chain: Imidazolonepropionase (415 aa).

2 residues coordinate Fe(3+): His-74 and His-76. 2 residues coordinate Zn(2+): His-74 and His-76. 4-imidazolone-5-propanoate-binding residues include Arg-83, Tyr-146, and His-179. An N-formimidoyl-L-glutamate-binding site is contributed by Tyr-146. His-244 provides a ligand contact to Fe(3+). His-244 contacts Zn(2+). Residue Gln-247 coordinates 4-imidazolone-5-propanoate. Asp-319 lines the Fe(3+) pocket. Position 319 (Asp-319) interacts with Zn(2+). Residues Asn-321 and Gly-323 each contribute to the N-formimidoyl-L-glutamate site. Residue Thr-324 participates in 4-imidazolone-5-propanoate binding.

Belongs to the metallo-dependent hydrolases superfamily. HutI family. Zn(2+) is required as a cofactor. Requires Fe(3+) as cofactor.

Its subcellular location is the cytoplasm. The catalysed reaction is 4-imidazolone-5-propanoate + H2O = N-formimidoyl-L-glutamate. It functions in the pathway amino-acid degradation; L-histidine degradation into L-glutamate; N-formimidoyl-L-glutamate from L-histidine: step 3/3. Its function is as follows. Catalyzes the hydrolytic cleavage of the carbon-nitrogen bond in imidazolone-5-propanoate to yield N-formimidoyl-L-glutamate. It is the third step in the universal histidine degradation pathway. The polypeptide is Imidazolonepropionase (Cupriavidus metallidurans (strain ATCC 43123 / DSM 2839 / NBRC 102507 / CH34) (Ralstonia metallidurans)).